Reading from the N-terminus, the 320-residue chain is Pyrroline-5-carboxylate reductase 2 (320 aa).

N-acetylserine is present on serine 2. NADP(+) is bound by residues 6–11 (IGAGQL) and serine 34. NADPH-binding residues include alanine 8, glutamine 10, leucine 11, serine 34, glutamate 36, asparagine 56, valine 70, lysine 71, and alanine 97. Residues asparagine 56, 69 to 72 (AVKP), and 95 to 97 (CAA) contribute to the NADP(+) site. Glutamate 164 is an L-proline binding site. Asparagine 230 is a binding site for NADPH. Alanine 237 and threonine 238 together coordinate L-proline. Positions 298–320 (TTLTPTSSGKLLTRSPVPGGKKD) are disordered. Phosphoserine is present on serine 304.

This sequence belongs to the pyrroline-5-carboxylate reductase family. Homodecamer; composed of 5 homodimers. Interacts with LTO1.

It localises to the cytoplasm. It is found in the mitochondrion. The catalysed reaction is L-proline + NADP(+) = (S)-1-pyrroline-5-carboxylate + NADPH + 2 H(+). The enzyme catalyses L-proline + NAD(+) = (S)-1-pyrroline-5-carboxylate + NADH + 2 H(+). Its pathway is amino-acid biosynthesis; L-proline biosynthesis; L-proline from L-glutamate 5-semialdehyde: step 1/1. Oxidoreductase that catalyzes the last step in proline biosynthesis, which corresponds to the reduction of pyrroline-5-carboxylate to L-proline using NAD(P)H. At physiologic concentrations, has higher specific activity in the presence of NADH. Involved in cellular response to oxidative stress. In some cell types, such as erythrocytes, its primary function may be the generation of NADP(+). The protein is Pyrroline-5-carboxylate reductase 2 (PYCR2) of Bos taurus (Bovine).